The chain runs to 249 residues: DNA repair protein RecO (249 aa).

The protein belongs to the RecO family.

Functionally, involved in DNA repair and RecF pathway recombination. This Rhodopseudomonas palustris (strain BisB5) protein is DNA repair protein RecO.